Here is a 161-residue protein sequence, read N- to C-terminus: MLNRVVLVGRLTRDPDLRYTPNGVAVANFNIAVNRPFSNQQGNREADFINCVIWRRPAENLANYMKKGSMVGVDGRIQTRNFEGQDGKTVYVTEVVADSVQFLETKGSQGGQDSSGGYQQNRNQNQYQNQNQYASNQNQDQEDPFKNNGEPIDISDDDLPF.

The region spanning 1-104 (MLNRVVLVGR…VVADSVQFLE (104 aa)) is the SSB domain. Residues 106–161 (KGSQGGQDSSGGYQQNRNQNQYQNQNQYASNQNQDQEDPFKNNGEPIDISDDDLPF) are disordered. A compositionally biased stretch (low complexity) spans 115–139 (SGGYQQNRNQNQYQNQNQYASNQNQ). The Important for interaction with partner proteins motif lies at 156–161 (DDDLPF).

Homotetramer.

Functionally, plays an important role in DNA replication, recombination and repair. Binds to ssDNA and to an array of partner proteins to recruit them to their sites of action during DNA metabolism. The polypeptide is Single-stranded DNA-binding protein (ssb) (Oceanobacillus iheyensis (strain DSM 14371 / CIP 107618 / JCM 11309 / KCTC 3954 / HTE831)).